A 1363-amino-acid chain; its full sequence is Zinc finger protein 541 (1363 aa).

Disordered stretches follow at residues 1-23 and 106-137; these read MEPYSLGEEGALPSEGHLPSFSE and LGALKVPKEADEGGRATGSTRKGKRQHSSPQN. C2H2-type zinc fingers lie at residues 140–162, 168–190, and 196–221; these read LDCSLCGKVFSSASSLSKHYLTH, HVCKVCSKAFKRQDHLTGHMLTH, and FVCIEQGCSKSYCDYRSLRRHYEVQH. Disordered regions lie at residues 232-269, 286-387, 440-532, and 574-741; these read EEEAYGDPTHNHDVANQPPPSGLRSLGPPEARSPGSVL, KIPS…GWPE, VASR…PGGL, and QVAT…GYRL. Residues 311 to 321 are compositionally biased toward polar residues; it reads SLGSSSCTPAS. The span at 335–345 shows a compositional bias: basic and acidic residues; the sequence is EETHPPRKEAA. The segment covering 453–465 has biased composition (low complexity); the sequence is PSSTPTSVEPSPS. A compositionally biased stretch (pro residues) spans 597 to 608; the sequence is GPWPPQTLPPAP. Residues 659–670 are compositionally biased toward low complexity; the sequence is PPSLTGPGLLPS. The segment at 838–860 adopts a C2H2-type 4 zinc-finger fold; sequence FVCKNCSQMFYTEKGLSSHMCFH. The segment at 935-978 is disordered; that stretch reads QGQEKDGEERDSKESCQYRKRKKRPQPKALFAPPAPSALGEPGP. Residues 937–951 show a composition bias toward basic and acidic residues; the sequence is QEKDGEERDSKESCQ. Residues 1063–1155 form the ELM2 domain; it reads PHINVGSRFQ…VALETLLLRG (93 aa). Residues 1170 to 1221 form the SANT domain; sequence TGSDIWTPMEKRLFKKAFCAHKKDFYLIHKMIQTKSVAQCVEYYYIWKKMVK. The tract at residues 1243–1298 is disordered; that stretch reads RTEDKVTCSPRERPTHRPTPELKIKTKSYRRESILHSSPSAAPKRTPEPPGSVESQ. The span at 1244–1276 shows a compositional bias: basic and acidic residues; sequence TEDKVTCSPRERPTHRPTPELKIKTKSYRRESI. The C2H2-type 5 zinc-finger motif lies at 1301-1323; the sequence is FPCRECERVFDKIKSRNAHMKRH. A disordered region spans residues 1343 to 1363; it reads LKEEEEEEEEELGADMGPLQW. The span at 1345 to 1355 shows a compositional bias: acidic residues; sequence EEEEEEEEELG.

Interacts with DNTTIP1. Identified in a complex with KCTD19, HDAC1 and HSPA2. Identified in a complex with HDAC1, HDAC2, DNTTIP1 and KCTD19. Identified in a complex with KCTD19 and HDAC1. In terms of tissue distribution, germ-cell-specific. Specifically present in testicular spermatogenic cells, but not in testicular and mature sperm. During spermatogenesis, it is present in spermatocytes and round spermatids only (at protein level).

It localises to the nucleus. Transcription regulator which is essential for male fertility and for the completion of meiotic prophase in spermatocytes. Regulates progression of the pachytene stage of meiotic prophase by activating the expression of genes involved in meiosis and post-meiosis during spermatogenesis. Maintains the repression of pre-pachytene transcriptional programs, including meiotic double-strand breaks (DSB) formation genes in pachytene spermatocytes and suppresses aberrant DSB formation after mid-pachytene, thus ensuring meiosis progression. This is Zinc finger protein 541 (Znf541) from Mus musculus (Mouse).